Reading from the N-terminus, the 267-residue chain is Pyridoxine 5'-phosphate synthase (267 aa).

Asparagine 8 contacts 3-amino-2-oxopropyl phosphate. 1-deoxy-D-xylulose 5-phosphate is bound at residue 10–11 (DH). Arginine 19 provides a ligand contact to 3-amino-2-oxopropyl phosphate. Histidine 44 serves as the catalytic Proton acceptor. The 1-deoxy-D-xylulose 5-phosphate site is built by arginine 46 and histidine 51. Glutamate 71 serves as the catalytic Proton acceptor. Residue threonine 101 coordinates 1-deoxy-D-xylulose 5-phosphate. Histidine 219 serves as the catalytic Proton donor. 3-amino-2-oxopropyl phosphate contacts are provided by residues glycine 220 and 241–242 (GH).

Belongs to the PNP synthase family. As to quaternary structure, homooctamer; tetramer of dimers.

Its subcellular location is the cytoplasm. It catalyses the reaction 3-amino-2-oxopropyl phosphate + 1-deoxy-D-xylulose 5-phosphate = pyridoxine 5'-phosphate + phosphate + 2 H2O + H(+). It functions in the pathway cofactor biosynthesis; pyridoxine 5'-phosphate biosynthesis; pyridoxine 5'-phosphate from D-erythrose 4-phosphate: step 5/5. Functionally, catalyzes the complicated ring closure reaction between the two acyclic compounds 1-deoxy-D-xylulose-5-phosphate (DXP) and 3-amino-2-oxopropyl phosphate (1-amino-acetone-3-phosphate or AAP) to form pyridoxine 5'-phosphate (PNP) and inorganic phosphate. This Helicobacter hepaticus (strain ATCC 51449 / 3B1) protein is Pyridoxine 5'-phosphate synthase.